Reading from the N-terminus, the 232-residue chain is Orotate phosphoribosyltransferase (232 aa).

Position 28 (K28) interacts with 5-phospho-alpha-D-ribose 1-diphosphate. Residue 36-37 coordinates orotate; the sequence is FF. 5-phospho-alpha-D-ribose 1-diphosphate-binding positions include 78–79, R108, K109, K112, H114, and 134–142; these read YK and DDVITAGTA. T138 and R166 together coordinate orotate.

Belongs to the purine/pyrimidine phosphoribosyltransferase family. PyrE subfamily. In terms of assembly, homodimer.

It carries out the reaction orotidine 5'-phosphate + diphosphate = orotate + 5-phospho-alpha-D-ribose 1-diphosphate. Its pathway is pyrimidine metabolism; UMP biosynthesis via de novo pathway; UMP from orotate: step 1/2. Catalyzes the transfer of a ribosyl phosphate group from 5-phosphoribose 1-diphosphate to orotate, leading to the formation of orotidine monophosphate (OMP). This Sordaria macrospora protein is Orotate phosphoribosyltransferase (URA5).